A 189-amino-acid polypeptide reads, in one-letter code: dCTP deaminase, dUMP-forming (189 aa).

DCTP is bound by residues 101-106 (KSSLGR), Asp-119, 127-129 (TLE), Gln-148, Tyr-162, and Gln-174. Glu-129 serves as the catalytic Proton donor/acceptor.

Belongs to the dCTP deaminase family. As to quaternary structure, homotrimer.

It catalyses the reaction dCTP + 2 H2O = dUMP + NH4(+) + diphosphate. The protein operates within pyrimidine metabolism; dUMP biosynthesis; dUMP from dCTP: step 1/1. Bifunctional enzyme that catalyzes both the deamination of dCTP to dUTP and the hydrolysis of dUTP to dUMP without releasing the toxic dUTP intermediate. The protein is dCTP deaminase, dUMP-forming of Rhodococcus opacus (strain B4).